The chain runs to 142 residues: Hemoglobin subunit alpha-1 (142 aa).

In terms of domain architecture, Globin spans 2-142 (VLSADDKSNV…VSTVLTSKYR (141 aa)). Histidine 59 is an O2 binding site. A heme b-binding site is contributed by histidine 88.

This sequence belongs to the globin family. As to quaternary structure, heterotetramer of two alpha chains and two beta chains. As to expression, red blood cells.

In terms of biological role, involved in oxygen transport from the lung to the various peripheral tissues. Functionally, hemopressin acts as an antagonist peptide of the cannabinoid receptor CNR1. Hemopressin-binding efficiently blocks cannabinoid receptor CNR1 and subsequent signaling. The chain is Hemoglobin subunit alpha-1 (HBA1) from Equus quagga burchellii (Burchell's zebra).